Consider the following 957-residue polypeptide: Ribonuclease 3-like protein 3 (957 aa).

An RNase III 1 domain is found at 4–142 (VEAVEKILNY…IAATVFIDVN (139 aa)). In terms of domain architecture, DRBM 1 spans 307 to 382 (NGRGELIEIC…AYHMIRALES (76 aa)). Positions 415-551 (VEAVEKILNY…VAGAVYIDVK (137 aa)) constitute an RNase III 2 domain. DRBM domains are found at residues 566 to 645 (EPIY…KLSE) and 837 to 912 (DEKG…ALES).

Its function is as follows. Ribonuclease that cleaves double-stranded RNA (dsRNA). In Arabidopsis thaliana (Mouse-ear cress), this protein is Ribonuclease 3-like protein 3 (RTL3).